A 242-amino-acid polypeptide reads, in one-letter code: Segregation and condensation protein A (242 aa).

It belongs to the ScpA family. Component of a cohesin-like complex composed of ScpA, ScpB and the Smc homodimer, in which ScpA and ScpB bind to the head domain of Smc. The presence of the three proteins is required for the association of the complex with DNA.

It is found in the cytoplasm. Participates in chromosomal partition during cell division. May act via the formation of a condensin-like complex containing Smc and ScpB that pull DNA away from mid-cell into both cell halves. In Lactococcus lactis subsp. lactis (strain IL1403) (Streptococcus lactis), this protein is Segregation and condensation protein A.